The chain runs to 218 residues: 3,4-dihydroxy-2-butanone 4-phosphate synthase (218 aa).

D-ribulose 5-phosphate is bound by residues arginine 37–glutamate 38, aspartate 42, arginine 150–threonine 154, and glutamate 174. Position 38 (glutamate 38) interacts with Mg(2+). Histidine 153 is a binding site for Mg(2+).

Belongs to the DHBP synthase family. In terms of assembly, homodimer. The cofactor is Mg(2+). Mn(2+) is required as a cofactor.

The enzyme catalyses D-ribulose 5-phosphate = (2S)-2-hydroxy-3-oxobutyl phosphate + formate + H(+). It functions in the pathway cofactor biosynthesis; riboflavin biosynthesis; 2-hydroxy-3-oxobutyl phosphate from D-ribulose 5-phosphate: step 1/1. In terms of biological role, catalyzes the conversion of D-ribulose 5-phosphate to formate and 3,4-dihydroxy-2-butanone 4-phosphate. The polypeptide is 3,4-dihydroxy-2-butanone 4-phosphate synthase (Hamiltonella defensa subsp. Acyrthosiphon pisum (strain 5AT)).